Consider the following 572-residue polypeptide: Glypican-5 (572 aa).

The signal sequence occupies residues 1 to 24; that stretch reads MDAQTWPVGFRCLLLLALVGSARS. N-linked (GlcNAc...) asparagine glycans are attached at residues Asn120 and Asn237. A disordered region spans residues 355-375; sequence SPRCSFDQSKEKHGMKTTTRN. 5 O-linked (Xyl...) (glycosaminoglycan) serine glycosylation sites follow: Ser441, Ser486, Ser495, Ser507, and Ser509. Asn527 is a glycosylation site (N-linked (GlcNAc...) asparagine).

This sequence belongs to the glypican family. As to expression, in adult, primarily expressed in the brain. Also detected in fetal brain, lung and liver.

It localises to the cell membrane. The protein localises to the secreted. The protein resides in the extracellular space. In terms of biological role, cell surface proteoglycan that bears heparan sulfate. This Homo sapiens (Human) protein is Glypican-5 (GPC5).